Consider the following 361-residue polypeptide: MAQCGGGDVSRHRKGHLDTVESLCQGLLDDVMLDDDKCRAMFGYLQEWQDLASMCYGSLGGEPPLAPEASNGSGSTGGGGSFRKRRPDDAKGESNSICKRQRGKQQQQQQPCHPDQMAAAVGKGRPERARPGAKKKAEVASPKDSPATSASTVTAGQKTDYIHVRARRGQATDSHSLAERVRRERISERMRYLQELVPGCNKVTGKAGMLDEIINYVQSLQKQVEFLSMKIAASNPVVNFNIVEDLFGRQLSQAACNPAALPAMALPMAQVEPSCLQMSPLQQMQTSAGSSGYGLEMVVSNQYSPPGGPMSVPAGASVEPCLNVNGAAGWDIGSHGLFSGFDAPFQSVQSDCLLDNLKMEM.

The interval 66-159 (APEASNGSGS…ASTVTAGQKT (94 aa)) is disordered. The span at 124–138 (GRPERARPGAKKKAE) shows a compositional bias: basic and acidic residues. Polar residues predominate over residues 146–157 (PATSASTVTAGQ). Positions 166-173 (ARRGQATD) match the Nuclear localization signal motif. Residues 170 to 183 (QATDSHSLAERVRR) form a basic motif; degenerate region. Residues 170-220 (QATDSHSLAERVRRERISERMRYLQELVPGCNKVTGKAGMLDEIINYVQSL) enclose the bHLH domain. A helix-loop-helix motif region spans residues 184 to 220 (ERISERMRYLQELVPGCNKVTGKAGMLDEIINYVQSL).

Belongs to the bHLH protein family. Homodimer. Interacts with IBH1.

It localises to the nucleus. Functionally, together with BCL1, positive regulator of cell elongation at least partially through increased gibberellic acid (GA) biosynthesis. This is Basic helix-loop-helix protein 79 from Oryza sativa subsp. indica (Rice).